Reading from the N-terminus, the 861-residue chain is Origin recognition complex subunit 1 (861 aa).

The BAH domain maps to 45-171 (IHIQIGQFVL…EKKFRPLSSE (127 aa)). The segment at 183-233 (AAKCQKPVRAKSKSAESPSWTPAEHVAKRIESRHSASKSRQTPTHPLTPRA) is disordered. Serine 199 is modified (phosphoserine). Threonine 203 carries the phosphothreonine modification. Residues 207–216 (HVAKRIESRH) show a composition bias toward basic and acidic residues. Phosphoserine is present on residues serine 252, serine 255, serine 273, and serine 287. The tract at residues 269 to 312 (SEITSPSKRSQPDKLQTLSPALKAPEKTRETGLSYTEDDKKASP) is disordered. A compositionally biased stretch (polar residues) spans 270–287 (EITSPSKRSQPDKLQTLS). At lysine 326 the chain carries N6-acetyllysine. Threonine 337 carries the post-translational modification Phosphothreonine. Serine 340 is subject to Phosphoserine. Disordered regions lie at residues 360-382 (KRDAKEAKAQNEATSTPHRIRRK) and 412-476 (PAAE…QIRS). 2 positions are modified to phosphoserine: serine 417 and serine 420. Residues 440 to 456 (SRNLRSSLKSSLHTLTK) are compositionally biased toward low complexity. Basic residues predominate over residues 457–466 (VPKKSLKPRT). Position 478 is a phosphoserine (serine 478). ATP contacts are provided by residues valine 500 and 534–542 (GVPGTGKTA). The segment at 501-861 (PESLPCREQE…DDVLYALKDE (361 aa)) is necessary and sufficient for ORC complex assembly. Residues aspartate 620 and glutamate 621 each contribute to the Mg(2+) site. 3 residues coordinate ATP: glutamate 621, asparagine 654, and arginine 720.

The protein belongs to the ORC1 family. As to quaternary structure, component of ORC, a complex composed of at least 6 subunits: ORC1, ORC2, ORC3, ORC4, ORC5 and ORC6. ORC is regulated in a cell-cycle dependent manner. It is sequentially assembled at the exit from anaphase of mitosis and disassembled as cells enter S phase. Interacts with CDC6 and KAT7/HBO1. Interacts with LRWD1 predominantly during the G1 phase and with less affinity during mitosis, when phosphorylated. In terms of processing, phosphorylated during mitosis.

It localises to the nucleus. Functionally, component of the origin recognition complex (ORC) that binds origins of replication. DNA-binding is ATP-dependent. The DNA sequences that define origins of replication have not been identified yet. ORC is required to assemble the pre-replication complex necessary to initiate DNA replication. This Homo sapiens (Human) protein is Origin recognition complex subunit 1 (ORC1).